We begin with the raw amino-acid sequence, 459 residues long: Cysteine--tRNA ligase (459 aa).

Cysteine 28 serves as a coordination point for Zn(2+). Positions 30-40 (VTVYDLCHIGH) match the 'HIGH' region motif. The Zn(2+) site is built by cysteine 209, histidine 234, and glutamate 238. The 'KMSKS' region motif lies at 266–270 (KMSKS). Lysine 269 is a binding site for ATP.

This sequence belongs to the class-I aminoacyl-tRNA synthetase family. In terms of assembly, monomer. Zn(2+) is required as a cofactor.

It localises to the cytoplasm. It catalyses the reaction tRNA(Cys) + L-cysteine + ATP = L-cysteinyl-tRNA(Cys) + AMP + diphosphate. In Haemophilus influenzae (strain ATCC 51907 / DSM 11121 / KW20 / Rd), this protein is Cysteine--tRNA ligase (cysS).